A 59-amino-acid chain; its full sequence is MAKTIKVTQVRSSIARLPKHKATLRGLGLRHMHHTVELIDTPAVRGMINQVSYMVKVEE.

The protein belongs to the universal ribosomal protein uL30 family. In terms of assembly, part of the 50S ribosomal subunit.

The chain is Large ribosomal subunit protein uL30 from Haemophilus influenzae (strain 86-028NP).